We begin with the raw amino-acid sequence, 253 residues long: CTP:phosphoglutamine cytidylyltransferase (253 aa).

It carries out the reaction N(5)-phospho-L-glutamine + CTP + H(+) = N(5)-(cytidine 5'-diphosphoramidyl)-L-glutamine + diphosphate. It functions in the pathway capsule biogenesis; capsule polysaccharide biosynthesis. Involved in the biosynthesis of the O-methyl phosphoramidate (MeOPN) group found on the capsular polysaccharide (CPS) of C.jejuni. Catalyzes the formation of CDP-L-glutamine from CTP and L-glutamine phosphate. In the presence of MnCTP, catalyzes the displacement of pyrophosphate from CTP using phosphoramidate, methyl phosphate, methyl phosphonate, phosphate, arsenate, ethanolamine phosphate, (R/S)-glycerol-1-phosphate, glycerol-2-phosphate, serinol phosphate, L-serine phosphate and 3-phospho-D-glycerate as substrate in addition to L-glutamine phosphate. This chain is CTP:phosphoglutamine cytidylyltransferase, found in Campylobacter jejuni subsp. jejuni serotype O:2 (strain ATCC 700819 / NCTC 11168).